Reading from the N-terminus, the 351-residue chain is Ribonucleoside-diphosphate reductase subunit M2 B (351 aa).

The tract at residues 1–31 (MGDPERPEAAGLDQDERSSSDTNENEIKSNE) is disordered. Residues D100, E131, and H134 each coordinate Fe cation. Y138 is a catalytic residue. The Fe cation site is built by E194, E228, and H231.

The protein belongs to the ribonucleoside diphosphate reductase small chain family. Heterotetramer with large (RRM1) subunit. Interacts with p53/TP53. Interacts with RRM1 in response to DNA damage. Requires Fe cation as cofactor.

The protein resides in the cytoplasm. It localises to the nucleus. The enzyme catalyses a 2'-deoxyribonucleoside 5'-diphosphate + [thioredoxin]-disulfide + H2O = a ribonucleoside 5'-diphosphate + [thioredoxin]-dithiol. Functionally, plays a pivotal role in cell survival by repairing damaged DNA in a p53/TP53-dependent manner. Supplies deoxyribonucleotides for DNA repair in cells arrested at G1 or G2. Contains an iron-tyrosyl free radical center required for catalysis. Forms an active ribonucleotide reductase (RNR) complex with RRM1 which is expressed both in resting and proliferating cells in response to DNA damage. The polypeptide is Ribonucleoside-diphosphate reductase subunit M2 B (RRM2B) (Pongo abelii (Sumatran orangutan)).